The sequence spans 435 residues: Exopolysaccharide production protein ExoQ (435 aa).

Transmembrane regions (helical) follow at residues 11 to 31 (PGAN…VFAY), 35 to 55 (FGQV…LVDY), 65 to 85 (YLWI…SAAP), 117 to 137 (GMIA…TYHY), 156 to 176 (LGFY…VLGE), 178 to 198 (GLWM…LLTS), 203 to 223 (SVLT…ITAL), 230 to 250 (LLFI…IYAG), 325 to 345 (VVET…TAFF), and 361 to 381 (MVLF…IDIL).

It is found in the cell membrane. It participates in glycan metabolism; exopolysaccharide biosynthesis. Its function is as follows. Involved in the production of exopolysaccharide. This Rhizobium meliloti (strain 1021) (Ensifer meliloti) protein is Exopolysaccharide production protein ExoQ (exoQ).